A 405-amino-acid chain; its full sequence is Pleckstrin homology-like domain family A member 1 (405 aa).

Composition is skewed to basic and acidic residues over residues 1-11 and 54-63; these read MRRTPAAERLS and RSPEDGREQP. Disordered stretches follow at residues 1–67, 189–217, and 293–405; these read MRRT…AHGS, QLQQQQQQQQPGQGTAEPSQPSGPTVASL, and QQHL…SNSA. The PH domain occupies 153-277; the sequence is ALKEGVLEKR…AEITLQMVQY (125 aa). Residues 189–202 are compositionally biased toward low complexity; the sequence is QLQQQQQQQQPGQG. The span at 204–213 shows a compositional bias: polar residues; that stretch reads AEPSQPSGPT. Residues 294-309 show a composition bias toward low complexity; the sequence is QHLVQQQPPQTQQIQP. Residues 309 to 344 are 16 X 2 AA repeats of P-Q; that stretch reads PQPQPQIQPQPQPQIQPQPQPQPQPQPQPQPQPQPQ. Positions 310-342 are enriched in pro residues; sequence QPQPQIQPQPQPQIQPQPQPQPQPQPQPQPQPQ. Residues 350 to 376 show a composition bias toward basic residues; the sequence is PHPHPHPYSHPHQHPHPHPHPHPHPHP. Residues 354–377 form an 11 X 2 AA repeats of P-H region; it reads PHPYSHPHQHPHPHPHPHPHPHPH. Residues 378-389 are compositionally biased toward low complexity; sequence PYQLQHAHQPLH.

As to quaternary structure, interacts with RPL14, EIF3S7 and PABPC4. In terms of tissue distribution, widely expressed with very high levels in adult liver and high levels in adult lung. According to PubMed:10428057 expressed at low levels in liver. Expressed at increased levels in atherosclerotic lesions observed in hyperhomocysteinema.

The protein localises to the cytoplasm. Its subcellular location is the cytoplasmic vesicle. The protein resides in the nucleus. It is found in the nucleolus. Seems to be involved in regulation of apoptosis. May be involved in detachment-mediated programmed cell death. May mediate apoptosis during neuronal development. May be involved in regulation of anti-apoptotic effects of IGF1. Required for TCR-induced apoptosis and expression of TNFRSF6/FAS in a T-cell hybridoma cell line. May be involved in translational regulation. The chain is Pleckstrin homology-like domain family A member 1 (Phlda1) from Mus musculus (Mouse).